We begin with the raw amino-acid sequence, 99 residues long: Large ribosomal subunit protein bL21 (99 aa).

It belongs to the bacterial ribosomal protein bL21 family. In terms of assembly, part of the 50S ribosomal subunit. Contacts protein L20.

Functionally, this protein binds to 23S rRNA in the presence of protein L20. This Mycoplasma mobile (strain ATCC 43663 / 163K / NCTC 11711) (Mesomycoplasma mobile) protein is Large ribosomal subunit protein bL21.